We begin with the raw amino-acid sequence, 181 residues long: Protein Syd (181 aa).

The protein belongs to the Syd family.

It localises to the cell inner membrane. Interacts with the SecY protein in vivo. May bind preferentially to an uncomplexed state of SecY, thus functioning either as a chelating agent for excess SecY in the cell or as a regulatory factor that negatively controls the translocase function. The chain is Protein Syd from Shigella dysenteriae serotype 1 (strain Sd197).